The primary structure comprises 69 residues: UPF0291 protein CD630_10710 (69 aa).

The protein belongs to the UPF0291 family.

It localises to the cytoplasm. The chain is UPF0291 protein CD630_10710 from Clostridioides difficile (strain 630) (Peptoclostridium difficile).